The sequence spans 743 residues: UvrABC system protein C (743 aa).

A GIY-YIG domain is found at 16-95; that stretch reads VDPGVYKFRD…IKEFDPRFNV (80 aa). The region spanning 208–243 is the UVR domain; it reads DKLVRQLEARMQQASEELDFETAARLRDDVGALRRA. Disordered regions lie at residues 497–543 and 694–743; these read AEAA…QTGR and PSAD…TGVE. Acidic residues predominate over residues 506–520; it reads QASDTDGDQVSDTDG. The span at 734–743 shows a compositional bias: polar residues; it reads QSASQRTGVE.

The protein belongs to the UvrC family. Interacts with UvrB in an incision complex.

The protein localises to the cytoplasm. Functionally, the UvrABC repair system catalyzes the recognition and processing of DNA lesions. UvrC both incises the 5' and 3' sides of the lesion. The N-terminal half is responsible for the 3' incision and the C-terminal half is responsible for the 5' incision. The protein is UvrABC system protein C of Rhodococcus opacus (strain B4).